The chain runs to 1170 residues: WD repeat-containing protein 35 (1170 aa).

WD repeat units follow at residues 12 to 51 (PNNV…DDSK), 69 to 108 (GHSG…WYEE), 113 to 152 (RNKS…IWGK), 154 to 193 (LKGI…IMKM), and 491 to 528 (GTRD…LIQK).

As to quaternary structure, component of the IFT complex A (IFT-A) complex. IFT-A complex is divided into a core subcomplex composed of IFT122:IFT140:WDR19 which is associated with TULP3 and a peripheral subcomplex composed of IFT43:WDR35:TTC21B. Interacts directy with IFT122, ITF43 and TTC21B. Interacts with IFT43. Interacts with CFAP61. Expressed at high levels in testis and at lower levels in the brain (at protein level). Also present in other tissues, including heart, uterus, spinal cord, ovary, liver, kidney, lung, pancreas and stomach.

It localises to the cytoplasm. The protein resides in the cytoskeleton. Its subcellular location is the microtubule organizing center. It is found in the centrosome. The protein localises to the cilium axoneme. It localises to the cilium basal body. Its function is as follows. As a component of the IFT complex A (IFT-A), a complex required for retrograde ciliary transport and entry into cilia of G protein-coupled receptors (GPCRs), it is involved in ciliogenesis and ciliary protein trafficking. May promote CASP3 activation and TNF-stimulated apoptosis. This is WD repeat-containing protein 35 (Wdr35) from Rattus norvegicus (Rat).